The chain runs to 355 residues: Epoxyqueuosine reductase (355 aa).

Aspartate 143 functions as the Proton donor in the catalytic mechanism. The 4Fe-4S ferredoxin-type domain maps to 185–217 (LPLPIDTPATAHCGTCTRCIDICPTQAIIAPHR). [4Fe-4S] cluster contacts are provided by cysteine 197, cysteine 200, cysteine 203, cysteine 207, cysteine 223, cysteine 250, cysteine 253, and cysteine 257.

It belongs to the QueG family. In terms of assembly, monomer. The cofactor is cob(II)alamin. [4Fe-4S] cluster is required as a cofactor.

It is found in the cytoplasm. It catalyses the reaction epoxyqueuosine(34) in tRNA + AH2 = queuosine(34) in tRNA + A + H2O. The protein operates within tRNA modification; tRNA-queuosine biosynthesis. In terms of biological role, catalyzes the conversion of epoxyqueuosine (oQ) to queuosine (Q), which is a hypermodified base found in the wobble positions of tRNA(Asp), tRNA(Asn), tRNA(His) and tRNA(Tyr). This is Epoxyqueuosine reductase from Xanthomonas campestris pv. campestris (strain ATCC 33913 / DSM 3586 / NCPPB 528 / LMG 568 / P 25).